The following is a 351-amino-acid chain: N-acetyl-gamma-glutamyl-phosphate reductase (351 aa).

The active site involves C154.

This sequence belongs to the NAGSA dehydrogenase family. Type 1 subfamily.

The protein localises to the cytoplasm. It catalyses the reaction N-acetyl-L-glutamate 5-semialdehyde + phosphate + NADP(+) = N-acetyl-L-glutamyl 5-phosphate + NADPH + H(+). Its pathway is amino-acid biosynthesis; L-arginine biosynthesis; N(2)-acetyl-L-ornithine from L-glutamate: step 3/4. In terms of biological role, catalyzes the NADPH-dependent reduction of N-acetyl-5-glutamyl phosphate to yield N-acetyl-L-glutamate 5-semialdehyde. The sequence is that of N-acetyl-gamma-glutamyl-phosphate reductase from Synechocystis sp. (strain ATCC 27184 / PCC 6803 / Kazusa).